A 446-amino-acid polypeptide reads, in one-letter code: MEASFVQTTMALGLPSKKASSRNVIVERRNLITVCRFSVKTLLEKYTAEPIDDSSEEFVNFAAILEQILSHRFKACAPAGPASWFSSDGQRGFWDYIRLACSKVPNNCVSSIENMENISTARAKGRAWIRVALMEKRMSEYITTALRDNRTTRRFYDSGAIMLREEATVLTGMLIGLSAIDFSFCLKGEVLDGKTPVVIDYTPYLKFTQSYDYLTDEEERHSAESSTSEDNSPEHPYLPLVTDEDSWYNKWHKMEQKFRIVYAQKGYLEELVRLRESQLKDLEAENRRLQLQLEEAAAQNQREKRELEGVILELQEQLTGLIPGDHAPLAQGSKELTTSLVNQWPSLSTLHRPEGASNSKLYRRHSFMSTEPLSAEASLSSDSQRLGEAKRDEEPWGPIGKDPTPSMLGLCGSLASIPSCKSLASFKSNECLVSDSPEGSPALSPS.

The interaction with RAP2A stretch occupies residues 1–298 (MEASFVQTTM…LQLQLEEAAA (298 aa)). One can recognise an RUN domain in the interval 52 to 189 (DDSSEEFVNF…IDFSFCLKGE (138 aa)). Position 215 is a phosphothreonine (Thr215). Positions 216 to 239 (DEEERHSAESSTSEDNSPEHPYLP) are disordered. Ser232 bears the Phosphoserine mark. Residues 267–322 (YLEELVRLRESQLKDLEAENRRLQLQLEEAAAQNQREKRELEGVILELQEQLTGLI) adopt a coiled-coil conformation. Residues 372–384 (PLSAEASLSSDSQ) are compositionally biased toward polar residues. The segment at 372–403 (PLSAEASLSSDSQRLGEAKRDEEPWGPIGKDP) is disordered. Residues 385–394 (RLGEAKRDEE) are compositionally biased toward basic and acidic residues. Residues Ser416 and Ser419 each carry the phosphoserine modification.

The protein belongs to the RUNDC3 family. As to quaternary structure, interacts with the GTP-bound form of RAP2A. As to expression, brain.

In terms of biological role, may act as an effector of RAP2A in neuronal cells. This is RUN domain-containing protein 3A (Rundc3a) from Mus musculus (Mouse).